We begin with the raw amino-acid sequence, 376 residues long: 4-hydroxy-3-methylbut-2-en-1-yl diphosphate synthase (flavodoxin) (376 aa).

Positions 272, 275, 307, and 314 each coordinate [4Fe-4S] cluster.

This sequence belongs to the IspG family. [4Fe-4S] cluster serves as cofactor.

It carries out the reaction (2E)-4-hydroxy-3-methylbut-2-enyl diphosphate + oxidized [flavodoxin] + H2O + 2 H(+) = 2-C-methyl-D-erythritol 2,4-cyclic diphosphate + reduced [flavodoxin]. The protein operates within isoprenoid biosynthesis; isopentenyl diphosphate biosynthesis via DXP pathway; isopentenyl diphosphate from 1-deoxy-D-xylulose 5-phosphate: step 5/6. Converts 2C-methyl-D-erythritol 2,4-cyclodiphosphate (ME-2,4cPP) into 1-hydroxy-2-methyl-2-(E)-butenyl 4-diphosphate. The polypeptide is 4-hydroxy-3-methylbut-2-en-1-yl diphosphate synthase (flavodoxin) (Blochmanniella pennsylvanica (strain BPEN)).